The chain runs to 531 residues: Acyl-CoA ligase azaF (531 aa).

188–199 (RLFSSGTTGLPK) contacts AMP. Residues 449–525 (EVEGVLRNHP…DAIPRNASGK (77 aa)) form an AMP-binding region.

Belongs to the ATP-dependent AMP-binding enzyme family.

It functions in the pathway secondary metabolite biosynthesis. Functionally, acyl-CoA ligase; part of the gene cluster that mediates the biosynthesis of azaphilones, a class of fungal metabolites characterized by a highly oxygenated pyrano-quinone bicyclic core and exhibiting a broad range of bioactivities. In the first step, the non-reducing polyketide synthase azaA forms the hexaketide precursor from successive condensations of five malonyl-CoA units, presumably with a simple acetyl-CoA starter unit. The reactive polyketide chain then undergoes a PT-mediated C2-C7 cyclization to afford the aromatic ring and is eventually released as an aldehyde through the R-domain. The putative ketoreductase azaE is proposed to catalyze the reduction of the terminal ketone resulting in the early culture product FK17-P2a. The monooxygenase azaH was demonstrated to be the only enzyme required to convert FK17-P2a to azanigerone E. AzaH first hydroxylates the benzaldehyde intermediate FK17-P2a at C4, which triggers the formation of the pyran-ring to afford azanigerone E. In parallel, the 2,4-dimethylhexanoyl chain is synthesized by the HR-PKS azaB and is proposed to be transferred to the C4-hydroxyl of azanigerone E by the acyltransferase azaD directly from the ACP domain of azaB. Alternatively, the 2,4-dimethyl-hexanoyl chain may be offloaded from the HR-PKS as a carboxylic acid and converted to an acyl-CoA by azaF. The resulting acyl-CoA molecule could then be taken up as a substrate by AzaD to form azanigerone B. To yield the carboxylic acid substituent in azanigerone A, the hydroxypropyl side chain of azanigerone B would need to undergo a C-C oxidative cleavage catalyzed by cytochrome P450 AzaI. AzaI is proposed to act on a vicinal diol that leads to a C-C bond scission either through an alkoxyradical intermediate or a peroxy complex. In the biosynthesis of azanigerone A, azanigerone B first undergoes hydroxylation at C10, possibly catalyzed by one of the two FAD-dependent monooxygenases encoded in the cluster, azaG or azaL, resulting in the vicinal diol azanigerone C. Oxidative cleavage of azanigerone C by azaI would yield the corresponding aldehyde derivative of azanigerone A. Finally, the dehydrogenase azaJ is proposed to convert the aldehyde functional group into the carboxylic acid, completing the conversion from azanigerone B to azanigerone A. Alternatively, the oxidation of aldehyde to carboxylic acid may be catalyzed by the same P450 enzyme azaI via consecutive oxidation or by endogenous alcohol dehydrogenase. In Aspergillus niger (strain ATCC 1015 / CBS 113.46 / FGSC A1144 / LSHB Ac4 / NCTC 3858a / NRRL 328 / USDA 3528.7), this protein is Acyl-CoA ligase azaF.